We begin with the raw amino-acid sequence, 90 residues long: Small ribosomal subunit protein uS19 (90 aa).

It belongs to the universal ribosomal protein uS19 family.

Protein S19 forms a complex with S13 that binds strongly to the 16S ribosomal RNA. The sequence is that of Small ribosomal subunit protein uS19 from Thioalkalivibrio sulfidiphilus (strain HL-EbGR7).